Consider the following 86-residue polypeptide: Omega-theraphotoxin-Hhn1a 2 (86 aa).

The signal sequence occupies residues 1 to 21 (MKSIVFVALLGLALLAVVCSA). Residues 22–50 (SEDAHKELLKEVVRAMVVDKTDAVQAEER) constitute a propeptide that is removed on maturation. 3 disulfides stabilise this stretch: Cys-52–Cys-66, Cys-59–Cys-71, and Cys-65–Cys-78.

The protein belongs to the neurotoxin 10 (Hwtx-1) family. 17 (Hntx-9) subfamily. Expressed by the venom gland.

Its subcellular location is the secreted. In terms of biological role, ion channel inhibitor. The sequence is that of Omega-theraphotoxin-Hhn1a 2 from Cyriopagopus hainanus (Chinese bird spider).